Reading from the N-terminus, the 129-residue chain is UPF0344 protein MW0851 (129 aa).

4 helical membrane passes run 1–21, 36–56, 67–87, and 99–119; these read MLHLHILSWVLAIILFIATYL, LHMILRLFMLLTLISGFWILI, MLLTLKMLCGVAVVGLMEVSI, and MFWITMALIIITMVLGVILPL.

The protein belongs to the UPF0344 family.

It localises to the cell membrane. This is UPF0344 protein MW0851 from Staphylococcus aureus (strain MW2).